The chain runs to 449 residues: Methionine aminopeptidase 2 (449 aa).

A disordered region spans residues M1–P91. Over residues E34 to Q50 the composition is skewed to acidic residues. Residues K61–A75 are compositionally biased toward basic residues. H199 serves as a coordination point for substrate. The a divalent metal cation site is built by D219, D230, and H299. Position 307 (H307) interacts with substrate. A divalent metal cation is bound by residues E335 and E430.

This sequence belongs to the peptidase M24A family. Methionine aminopeptidase eukaryotic type 2 subfamily. Requires Co(2+) as cofactor. Zn(2+) is required as a cofactor. The cofactor is Mn(2+). Fe(2+) serves as cofactor.

Its subcellular location is the cytoplasm. It carries out the reaction Release of N-terminal amino acids, preferentially methionine, from peptides and arylamides.. In terms of biological role, cotranslationally removes the N-terminal methionine from nascent proteins. The N-terminal methionine is often cleaved when the second residue in the primary sequence is small and uncharged (Met-Ala-, Cys, Gly, Pro, Ser, Thr, or Val). This chain is Methionine aminopeptidase 2, found in Arthroderma benhamiae (strain ATCC MYA-4681 / CBS 112371) (Trichophyton mentagrophytes).